The chain runs to 65 residues: Large ribosomal subunit protein bL35 (65 aa).

The protein belongs to the bacterial ribosomal protein bL35 family.

The chain is Large ribosomal subunit protein bL35 from Karelsulcia muelleri (strain GWSS) (Sulcia muelleri).